The primary structure comprises 485 residues: Glutamyl-tRNA(Gln) amidotransferase subunit A (485 aa).

Residues lysine 79 and serine 154 each act as charge relay system in the active site. Serine 178 acts as the Acyl-ester intermediate in catalysis.

This sequence belongs to the amidase family. GatA subfamily. Heterotrimer of A, B and C subunits.

The catalysed reaction is L-glutamyl-tRNA(Gln) + L-glutamine + ATP + H2O = L-glutaminyl-tRNA(Gln) + L-glutamate + ADP + phosphate + H(+). Allows the formation of correctly charged Gln-tRNA(Gln) through the transamidation of misacylated Glu-tRNA(Gln) in organisms which lack glutaminyl-tRNA synthetase. The reaction takes place in the presence of glutamine and ATP through an activated gamma-phospho-Glu-tRNA(Gln). This is Glutamyl-tRNA(Gln) amidotransferase subunit A from Staphylococcus saprophyticus subsp. saprophyticus (strain ATCC 15305 / DSM 20229 / NCIMB 8711 / NCTC 7292 / S-41).